A 424-amino-acid chain; its full sequence is Virion nicking-joining enzyme (424 aa).

PLD phosphodiesterase domains follow at residues 110-137 (LGGV…DWRS) and 320-346 (YSRV…TGNY).

This sequence belongs to the orthopoxvirus OPG042 family.

The protein localises to the virion. Functionally, DNA nicking enzyme that cleaves extruded cruciform DNA at its tip. Probably nicks viral hairpins. The sequence is that of Virion nicking-joining enzyme (OPG042) from Vaccinia virus (strain Western Reserve) (VACV).